The chain runs to 352 residues: MTVAVGRPQSQRGAFDVLDDWLKRDRFVFVGWSGILLFPCAFLSIGGWLTGTTFVTSWYTHGLASSYLEGCNFLTVAISSPAYSMGHSLLFLWGPEAQWDFARWCQIGGLWSFTALHGAFALIGFCLRQIEIARLVGIRPYNAIAFTGPIAVFVSVFLMYPLGQSSWFFAPSFGVAGIFRFILFLQGFHNWTLNPFHMMGVAGILGGALLCAIHGATVENTLFQDGEAANTFRAFEPTQSEETYSMVTANRFWSQIFGIAFSNKRWLHFFMLFVPVTGLWMSSIGIVGLAFNLRAYDFVSQELRAADDPEFETFYTKNILLNEGIRAWMSPADQPHQNFMFPEEVLPRGNAL.

Residues 40-60 (CAFLSIGGWLTGTTFVTSWYT) traverse the membrane as a helical segment. A chlorophyll a-binding site is contributed by His117. The chain crosses the membrane as a helical span at residues 124-140 (GFCLRQIEIARLVGIRP). Pheophytin a-binding residues include Gln129 and Asn142. A helical membrane pass occupies residues 152–165 (VFVSVFLMYPLGQS). Residue His197 coordinates chlorophyll a. The chain crosses the membrane as a helical span at residues 207 to 227 (GALLCAIHGATVENTLFQDGE). His214 and Phe261 together coordinate a plastoquinone. His214 contributes to the Fe cation binding site. Position 268 (His268) interacts with Fe cation. The helical transmembrane segment at 278 to 294 (GLWMSSIGIVGLAFNLR) threads the bilayer.

This sequence belongs to the reaction center PufL/M/PsbA/D family. PSII is composed of 1 copy each of membrane proteins PsbA, PsbB, PsbC, PsbD, PsbE, PsbF, PsbH, PsbI, PsbJ, PsbK, PsbL, PsbM, PsbT, PsbX, PsbY, PsbZ, Psb30/Ycf12, peripheral proteins PsbO, CyanoQ (PsbQ), PsbU, PsbV and a large number of cofactors. It forms dimeric complexes. Requires The D1/D2 heterodimer binds P680, chlorophylls that are the primary electron donor of PSII, and subsequent electron acceptors. It shares a non-heme iron and each subunit binds pheophytin, quinone, additional chlorophylls, carotenoids and lipids. There is also a Cl(-1) ion associated with D1 and D2, which is required for oxygen evolution. The PSII complex binds additional chlorophylls, carotenoids and specific lipids. as cofactor.

It is found in the cellular thylakoid membrane. The catalysed reaction is 2 a plastoquinone + 4 hnu + 2 H2O = 2 a plastoquinol + O2. Functionally, photosystem II (PSII) is a light-driven water:plastoquinone oxidoreductase that uses light energy to abstract electrons from H(2)O, generating O(2) and a proton gradient subsequently used for ATP formation. It consists of a core antenna complex that captures photons, and an electron transfer chain that converts photonic excitation into a charge separation. The D1/D2 (PsbA/PsbD) reaction center heterodimer binds P680, the primary electron donor of PSII as well as several subsequent electron acceptors. D2 is needed for assembly of a stable PSII complex. The protein is Photosystem II D2 protein of Trichodesmium erythraeum (strain IMS101).